Reading from the N-terminus, the 465-residue chain is Hydroxyacid-oxoacid transhydrogenase, mitochondrial (465 aa).

Lys-443 is subject to N6-acetyllysine. At Ser-450 the chain carries Phosphoserine.

It belongs to the iron-containing alcohol dehydrogenase family. Hydroxyacid-oxoacid transhydrogenase subfamily. Expressed in white and brown adipose tissues, liver, and kidney. Expression is differentiation-dependent during in vitro brown and white adipogenesis.

Its subcellular location is the mitochondrion. The catalysed reaction is (S)-3-hydroxybutanoate + 2-oxoglutarate = (R)-2-hydroxyglutarate + acetoacetate. It catalyses the reaction 4-hydroxybutanoate + 2-oxoglutarate = (R)-2-hydroxyglutarate + succinate semialdehyde. Its function is as follows. Catalyzes the cofactor-independent reversible oxidation of gamma-hydroxybutyrate (GHB) to succinic semialdehyde (SSA) coupled to reduction of 2-ketoglutarate (2-KG) to D-2-hydroxyglutarate (D-2-HG). L-3-hydroxybutyrate (L-3-OHB) is also a substrate for HOT when using 2-KG as hydrogen acceptor, resulting in the formation of D-2-HG. The polypeptide is Hydroxyacid-oxoacid transhydrogenase, mitochondrial (Adhfe1) (Mus musculus (Mouse)).